Consider the following 473-residue polypeptide: ATP synthase subunit beta (473 aa).

Residue 153–160 (GGAGVGKT) coordinates ATP.

This sequence belongs to the ATPase alpha/beta chains family. F-type ATPases have 2 components, CF(1) - the catalytic core - and CF(0) - the membrane proton channel. CF(1) has five subunits: alpha(3), beta(3), gamma(1), delta(1), epsilon(1). CF(0) has three main subunits: a(1), b(2) and c(9-12). The alpha and beta chains form an alternating ring which encloses part of the gamma chain. CF(1) is attached to CF(0) by a central stalk formed by the gamma and epsilon chains, while a peripheral stalk is formed by the delta and b chains.

The protein resides in the cell membrane. The enzyme catalyses ATP + H2O + 4 H(+)(in) = ADP + phosphate + 5 H(+)(out). Its function is as follows. Produces ATP from ADP in the presence of a proton gradient across the membrane. The catalytic sites are hosted primarily by the beta subunits. The protein is ATP synthase subunit beta of Rickettsia africae (strain ESF-5).